The primary structure comprises 342 residues: Autoinducer 2 import system permease protein LsrC (342 aa).

Residues 1-13 (MLKFIQNNREITA) lie on the Periplasmic side of the membrane. The chain crosses the membrane as a helical span at residues 14–34 (LLAVVLLFVLPGFLDRQYLSV). The Cytoplasmic portion of the chain corresponds to 35–38 (QTLT). A helical transmembrane segment spans residues 39 to 59 (MVYSSAQILILLAMGATLVML). Residues 60-69 (TRNIDVSVGS) are Periplasmic-facing. A helical membrane pass occupies residues 70–90 (ITGMCAVLLGMLLNAGYSLPV). At 91–92 (AC) the chain is on the cytoplasmic side. A helical transmembrane segment spans residues 93–113 (VATLLLGLLAGFFNGVLVAWL). A topological domain (periplasmic) is located at residue lysine 114. The chain crosses the membrane as a helical span at residues 115-135 (IPAIVATLGTLGLYRGIMLLW). The Cytoplasmic portion of the chain corresponds to 136 to 154 (TGGKWIEGLPAELKQLSAP). The chain crosses the membrane as a helical span at residues 155-175 (LLLGVSAIGWLTIILVAFMAW). Topologically, residues 176-212 (LLAKTAFGRSFYATGDNLQGARQLGVRTEAIRIVAFS) are periplasmic. The helical transmembrane segment at 213–233 (LNGCMAALAGIVFASQIGFIP) threads the bilayer. The Cytoplasmic portion of the chain corresponds to 234-251 (NQTGTGLEMKAIAACVLG). Residues 252-272 (GISLLGGSGAIIGAVLGAWFL) traverse the membrane as a helical segment. At 273 to 283 (TQIDSVLVLLR) the chain is on the periplasmic side. Residues 284–304 (IPAWWNDFIAGLVLLAVLVFD) traverse the membrane as a helical segment. Over 305–342 (GRLRCALERNLRRQKYARFMTPPPSVKPASSGKKREAA) the chain is Cytoplasmic.

Belongs to the binding-protein-dependent transport system permease family. AraH/RbsC subfamily. As to quaternary structure, the complex is composed of two ATP-binding proteins (LsrA), two transmembrane proteins (LsrC and LsrD) and a solute-binding protein (LsrB).

The protein resides in the cell inner membrane. In terms of biological role, part of the ABC transporter complex LsrABCD involved in autoinducer 2 (AI-2) import. Probably responsible for the translocation of the substrate across the membrane. The protein is Autoinducer 2 import system permease protein LsrC (lsrC) of Escherichia coli (strain K12 / DH10B).